A 600-amino-acid polypeptide reads, in one-letter code: UvrABC system protein C (600 aa).

Residues 15-92 (EKPGCYLMKD…IKKYQPYYNV (78 aa)) enclose the GIY-YIG domain. Residues 197-232 (GAVKQDLTQKMEQASEQLEFERAAEIRDQLKYIEET) form the UVR domain.

It belongs to the UvrC family. Interacts with UvrB in an incision complex.

The protein resides in the cytoplasm. Its function is as follows. The UvrABC repair system catalyzes the recognition and processing of DNA lesions. UvrC both incises the 5' and 3' sides of the lesion. The N-terminal half is responsible for the 3' incision and the C-terminal half is responsible for the 5' incision. This chain is UvrABC system protein C, found in Lactobacillus helveticus (strain DPC 4571).